Reading from the N-terminus, the 477-residue chain is RTX-I toxin determinant D (477 aa).

At 1–59 (MKTWLMGLYEFFQAYKTVWTEIWKIRHQLDTPDREKDENEFLPAHLELIETPVSKKPRL) the chain is on the cytoplasmic side. The helical transmembrane segment at 60 to 80 (IAYLIMLFLFLALVISIVSHV) threads the bilayer. At 81–477 (EIVATATGKL…ESVSESLRER (397 aa)) the chain is on the periplasmic side.

It belongs to the membrane fusion protein (MFP) (TC 8.A.1) family.

The protein resides in the cell inner membrane. Involved in the transport of the toxin RTX-I as well as that of RTX-II. In Actinobacillus pleuropneumoniae (Haemophilus pleuropneumoniae), this protein is RTX-I toxin determinant D (apxID).